A 484-amino-acid polypeptide reads, in one-letter code: UDP-N-acetylmuramate--L-alanine ligase (484 aa).

126 to 132 provides a ligand contact to ATP; that stretch reads GTHGKTT.

The protein belongs to the MurCDEF family.

The protein resides in the cytoplasm. The enzyme catalyses UDP-N-acetyl-alpha-D-muramate + L-alanine + ATP = UDP-N-acetyl-alpha-D-muramoyl-L-alanine + ADP + phosphate + H(+). Its pathway is cell wall biogenesis; peptidoglycan biosynthesis. Cell wall formation. This Tolumonas auensis (strain DSM 9187 / NBRC 110442 / TA 4) protein is UDP-N-acetylmuramate--L-alanine ligase.